Consider the following 367-residue polypeptide: 3-dehydroquinate synthase (367 aa).

Residues 111-115, 135-136, Lys148, Lys157, and 175-178 contribute to the NAD(+) site; these read GVVGD, TS, and TLDT. Zn(2+) contacts are provided by Glu190, His254, and His271.

It belongs to the sugar phosphate cyclases superfamily. Dehydroquinate synthase family. The cofactor is Co(2+). Zn(2+) is required as a cofactor. It depends on NAD(+) as a cofactor.

The protein localises to the cytoplasm. It catalyses the reaction 7-phospho-2-dehydro-3-deoxy-D-arabino-heptonate = 3-dehydroquinate + phosphate. The protein operates within metabolic intermediate biosynthesis; chorismate biosynthesis; chorismate from D-erythrose 4-phosphate and phosphoenolpyruvate: step 2/7. Functionally, catalyzes the conversion of 3-deoxy-D-arabino-heptulosonate 7-phosphate (DAHP) to dehydroquinate (DHQ). This chain is 3-dehydroquinate synthase, found in Salinibacter ruber (strain DSM 13855 / M31).